The following is a 520-amino-acid chain: Laccase-1 (520 aa).

Residues 1-19 (MRLSNALVLVAACISSVVA) form the signal peptide. Plastocyanin-like domains follow at residues 21–145 (TRTF…FIVY), 157–305 (VDDE…LTLA), and 375–488 (TVPV…FAEA). Residues H82 and H84 each coordinate Cu cation. Intrachain disulfides connect C103-C509 and C135-C229. The N-linked (GlcNAc...) asparagine glycan is linked to N108. Positions 127 and 129 each coordinate Cu cation. N239 and N299 each carry an N-linked (GlcNAc...) asparagine glycan. 7 residues coordinate Cu cation: H417, H420, H422, H470, C471, H472, and H476. An N-linked (GlcNAc...) asparagine glycan is attached at N492.

It belongs to the multicopper oxidase family. Cu cation is required as a cofactor.

Its subcellular location is the secreted. It catalyses the reaction 4 hydroquinone + O2 = 4 benzosemiquinone + 2 H2O. In terms of biological role, lignin degradation and detoxification of lignin-derived products. This chain is Laccase-1 (lcc1), found in Agaricus bisporus (White button mushroom).